The primary structure comprises 65 residues: Large ribosomal subunit protein bL28 (65 aa).

Residues 1 to 21 (MAKKDQLTLRGPLYGNNRSHS) form a disordered region.

Belongs to the bacterial ribosomal protein bL28 family.

The chain is Large ribosomal subunit protein bL28 from Mycoplasma pneumoniae (strain ATCC 29342 / M129 / Subtype 1) (Mycoplasmoides pneumoniae).